We begin with the raw amino-acid sequence, 196 residues long: Dephospho-CoA kinase (196 aa).

The DPCK domain maps to 6-196; sequence AIALTGGIGT…QVERFLKTLL (191 aa). 14–19 is a binding site for ATP; sequence GTGKST.

It belongs to the CoaE family.

The protein localises to the cytoplasm. It catalyses the reaction 3'-dephospho-CoA + ATP = ADP + CoA + H(+). The protein operates within cofactor biosynthesis; coenzyme A biosynthesis; CoA from (R)-pantothenate: step 5/5. In terms of biological role, catalyzes the phosphorylation of the 3'-hydroxyl group of dephosphocoenzyme A to form coenzyme A. The polypeptide is Dephospho-CoA kinase (Helicobacter pylori (strain J99 / ATCC 700824) (Campylobacter pylori J99)).